The sequence spans 368 residues: MAPKKAEEVVESPPVSSEEEESGSSGEESESSAEVPKKVESSQKPESDSEGESESESSSGPEPESEPAKTIKLKPVGTKPIPETSGSAATVPESSTAKRPLKEAAPEAIKKQKTSDTEHVKKPITNDEVKKISSEDAKKMFQRLFSETDEIALLQGIIDFTSTKGDPYEDIDAFCIYVKKLIDFDATKNQIVTKLQRLKKKFNNAVKNSLKKGKTEDDIEFAKDLEQKGFELSRKIWGSNGVLVTGKSSRKKVGGTPAPKEMKLVAHSTPKKQQEEAKKPERTEAKVVNTGLSIGKEIASFLNADNGSSCGLDESTLTAVWAKVADGAEKREVEEKWKKLKAKQFELCLQRSGLVNETAKMIFKAYES.

The interval 1–123 (MAPKKAEEVV…TSDTEHVKKP (123 aa)) is disordered. Acidic residues predominate over residues 17-31 (SEEEESGSSGEESES). Over residues 35 to 47 (VPKKVESSQKPES) the composition is skewed to basic and acidic residues. A compositionally biased stretch (polar residues) spans 84–97 (TSGSAATVPESSTA). Residues 100–123 (PLKEAAPEAIKKQKTSDTEHVKKP) show a composition bias toward basic and acidic residues.

It belongs to the GeBP family. In terms of assembly, mono-, di- and oligomers. Associated with the Mediator complex. Interacts with MED6. Interacts with MED10A, MED28 and MED32. Interacts with DEK3.

It is found in the nucleus. Its function is as follows. Transcription factor that binds promoters containing the CryR2 element, 5'-ACATAWCT-3'. The DNA-binding activity is decreased upon direct physical interaction with the mediator subunits and is modulated by redox conditions. The oxidized protein is the preferential binding form. The sequence is that of GLABROUS1 enhancer-binding protein-like from Arabidopsis thaliana (Mouse-ear cress).